The sequence spans 1321 residues: Bile salt export pump (1321 aa).

Topologically, residues 1–62 (MSDSVILRSV…FSSSKDIWLM (62 aa)) are cytoplasmic. The ABC transmembrane type-1 1 domain maps to 62–385 (MLMGGVCALL…ASSCLEIFST (324 aa)). Residues 63–83 (LMGGVCALLHGMAQPGILIIF) form a helical membrane-spanning segment. The Extracellular portion of the chain corresponds to 84 to 147 (GIMTDIFIKY…MIKFSGIYAG (64 aa)). Residues Asn109, Asn116, Asn122, and Asn125 are each glycosylated (N-linked (GlcNAc...) asparagine). Residues 148 to 168 (VGMTVLILGYFQIRLWVITGA) form a helical membrane-spanning segment. Residues 169 to 215 (RQIRRMRKIYFRRIMRMEIGWFDCTSVGELNSRFADDIEKINDAIAD) are Cytoplasmic-facing. Residues 216-236 (QLAHFLQRMSTAMCGLLLGFY) traverse the membrane as a helical segment. Residues 237–240 (RGWK) are Extracellular-facing. A helical transmembrane segment spans residues 241–261 (LTLVILAVSPLIGIGAAVIGL). Topologically, residues 262–319 (SIAKFTELELKAYAKAGSIADEVLSSIRTVAAFGGENKEVERYEKNLVFAQRWGIWKG) are cytoplasmic. Residues 320–340 (MVMGFFTGYMWCLIFFCYALA) form a helical membrane-spanning segment. Residues 341-353 (FWYGSTLVLDEEE) are Extracellular-facing. Residues 354 to 374 (YTPGTLVQIFLCVILAAMNIG) traverse the membrane as a helical segment. Residues 375-755 (HASSCLEIFS…KYNIPEWHYI (381 aa)) are Cytoplasmic-facing. Positions 420 to 656 (IEFHNVTFHY…KGVYFMLVTL (237 aa)) constitute an ABC transporter 1 domain. 455-462 (GSSGAGKS) provides a ligand contact to ATP. Thr586 is modified (phosphothreonine). Phosphoserine is present on Ser587. Residues 651 to 674 (FMLVTLQSQGDNAHKETSIMGKDA) form an interaction with HAX1 region. Residues Ser692, Ser703, and Ser706 each carry the phosphoserine modification. Residues 755–1043 (ILVGSLSAAI…TFSYTPSYAK (289 aa)) form the ABC transmembrane type-1 2 domain. The chain crosses the membrane as a helical span at residues 756–776 (LVGSLSAAINGAVTPIYSLLF). Residues 777-794 (SQLLGTFSLLDKEQQRSE) lie on the Extracellular side of the membrane. Residues 795–815 (IHSMCLFFVILGCVSIFTQFL) traverse the membrane as a helical segment. Residues 816–869 (QGYTFAKSGELLTKRLRKFGFKAMLGQDIGWFDDLRNNPGVLTTRLATDASQVQ) lie on the Cytoplasmic side of the membrane. Transmembrane regions (helical) follow at residues 870–890 (GATGSQVGMMVNSFTNIIAAL) and 891–911 (LIAFFFSWKLSLIITIFFPFL). Topologically, residues 912–979 (ALSGAVQTKM…SYKTAVRKAN (68 aa)) are cytoplasmic. A helical transmembrane segment spans residues 980-1000 (IYGLCFAFSQGIAFLANSAAY). At 1001 to 1011 (RYGGYLIAYEG) the chain is on the extracellular side. The chain crosses the membrane as a helical span at residues 1012 to 1032 (LGFSHVFRVVSSVALSATAVG). The Cytoplasmic portion of the chain corresponds to 1033–1321 (RTFSYTPSYA…KLVITGAPIS (289 aa)). The ABC transporter 2 domain maps to 1078–1316 (IDFIDCKFTY…KGAYYKLVIT (239 aa)). 1113–1120 (GSSGCGKS) serves as a coordination point for ATP. Residue Ser1321 is modified to Phosphoserine.

Belongs to the ABC transporter superfamily. ABCB family. Multidrug resistance exporter (TC 3.A.1.201) subfamily. As to quaternary structure, interacts with HAX1. Interacts with the adapter protein complex 2 (AP-2) throught AP2A2 or AP2A1; this interaction regulates cell membrane expression of ABCB11 through its internalization in a clathrin-dependent manner and its subsequent degradation. Post-translationally, ubiquitinated; short-chain ubiquitination regulates cell-Surface expression of ABCB11. In terms of processing, N-glycosylated. Expressed predominantly, if not exclusively in the liver, where it was further localized to the canalicular microvilli and to subcanalicular vesicles of the hepatocytes by in situ.

It is found in the apical cell membrane. It localises to the recycling endosome membrane. The protein resides in the endosome. The protein localises to the cell membrane. It carries out the reaction cholate(in) + ATP + H2O = cholate(out) + ADP + phosphate + H(+). The catalysed reaction is taurocholate(in) + ATP + H2O = taurocholate(out) + ADP + phosphate + H(+). The enzyme catalyses glycocholate(in) + ATP + H2O = glycocholate(out) + ADP + phosphate + H(+). It catalyses the reaction glycochenodeoxycholate(in) + ATP + H2O = glycochenodeoxycholate(out) + ADP + phosphate + H(+). It carries out the reaction taurochenodeoxycholate(in) + ATP + H2O = taurochenodeoxycholate(out) + ADP + phosphate + H(+). The catalysed reaction is glycoursodeoxycholate(in) + ATP + H2O = glycoursodeoxycholate(out) + ADP + phosphate + H(+). The enzyme catalyses tauroursodeoxycholate(in) + ATP + H2O = tauroursodeoxycholate(out) + ADP + phosphate + H(+). It catalyses the reaction taurodeoxycholate(in) + ATP + H2O = taurodeoxycholate(out) + ADP + phosphate + H(+). It carries out the reaction pravastatin(in) + ATP + H2O = pravastatin(out) + ADP + phosphate + H(+). The uptake of taurocholate is inhibited by taurolithocholate sulfate with an IC(50) of 52.9 uM. Pravastatin competitively inhibits the transport of taurocholic acid. Cyclosporin A, glibenclamide, rifampicin and troglitazonestrongly competitively inhibit the transport activity of taurocholate. The canalicular transport activity of taurocholate is strongly dependent on canalicular membrane cholesterol content. The uptake of taurocholate is increased by short- and medium-chain fatty acids. Cholesterol increases transport capacity of taurocholate without affecting the affinity for the substrate. Catalyzes the transport of the major hydrophobic bile salts, such as taurine and glycine-conjugated cholic acid across the canalicular membrane of hepatocytes in an ATP-dependent manner, therefore participates in hepatic bile acid homeostasis and consequently to lipid homeostasis through regulation of biliary lipid secretion in a bile salts dependent manner. Transports taurine-conjugated bile salts more rapidly than glycine-conjugated bile salts. Also transports non-bile acid compounds, such as pravastatin and fexofenadine in an ATP-dependent manner and may be involved in their biliary excretion. The chain is Bile salt export pump from Rattus norvegicus (Rat).